Here is a 428-residue protein sequence, read N- to C-terminus: 3-phosphoshikimate 1-carboxyvinyltransferase (428 aa).

3-phosphoshikimate-binding residues include K19, S20, and R24. K19 contacts phosphoenolpyruvate. Positions 91 and 119 each coordinate phosphoenolpyruvate. The 3-phosphoshikimate site is built by S164, Q166, D312, and K339. Q166 is a phosphoenolpyruvate binding site. The active-site Proton acceptor is the D312. Phosphoenolpyruvate is bound by residues R343 and R386.

This sequence belongs to the EPSP synthase family. In terms of assembly, monomer.

Its subcellular location is the cytoplasm. It catalyses the reaction 3-phosphoshikimate + phosphoenolpyruvate = 5-O-(1-carboxyvinyl)-3-phosphoshikimate + phosphate. Its pathway is metabolic intermediate biosynthesis; chorismate biosynthesis; chorismate from D-erythrose 4-phosphate and phosphoenolpyruvate: step 6/7. Its function is as follows. Catalyzes the transfer of the enolpyruvyl moiety of phosphoenolpyruvate (PEP) to the 5-hydroxyl of shikimate-3-phosphate (S3P) to produce enolpyruvyl shikimate-3-phosphate and inorganic phosphate. This is 3-phosphoshikimate 1-carboxyvinyltransferase from Bacillus subtilis (strain 168).